Here is a 312-residue protein sequence, read N- to C-terminus: ADIPOR-like receptor IZH4 (312 aa).

Positions methionine 1 to glutamate 38 are disordered. The Cytoplasmic segment spans residues methionine 1–serine 64. Positions threonine 16–glutamate 38 are enriched in basic and acidic residues. The helical transmembrane segment at leucine 65–threonine 85 threads the bilayer. Residues aspartate 86–aspartate 101 lie on the Lumenal side of the membrane. A helical transmembrane segment spans residues tyrosine 102–tyrosine 122. Residues histidine 123 to serine 141 are Cytoplasmic-facing. A helical membrane pass occupies residues tyrosine 142 to tyrosine 162. The Lumenal segment spans residues aspartate 163–valine 165. Residues phenylalanine 166–isoleucine 186 form a helical membrane-spanning segment. Over leucine 187–valine 201 the chain is Cytoplasmic. The helical transmembrane segment at phenylalanine 202–phenylalanine 222 threads the bilayer. Topologically, residues aspartate 223 to arginine 231 are lumenal. The helical transmembrane segment at isoleucine 232–valine 252 threads the bilayer. The Cytoplasmic portion of the chain corresponds to threonine 253–histidine 277. A helical transmembrane segment spans residues leucine 278 to methionine 298. Residues histidine 299 to serine 312 lie on the Lumenal side of the membrane.

This sequence belongs to the ADIPOR family.

Its subcellular location is the endoplasmic reticulum membrane. ADIPOR-like receptor involved in zinc metabolism either by altering membrane sterol content or by directly altering cellular zinc levels. The protein is ADIPOR-like receptor IZH4 (IZH4) of Saccharomyces cerevisiae (strain ATCC 204508 / S288c) (Baker's yeast).